The following is a 569-amino-acid chain: MNSEVIKKGVERAPHRSLLRATGIIKDEADFQKPFVAIANSFAEIVPGHAHLNEFVKEIKEAVREAGGVPFEFNTLALCDGIAMNHPGMRYSLPSRELVADSVETMVQGHRFDGLICIPNCDKIVPGMLMAAVRLNIPTIFVSGGPMKAGRAKDGRPIDLISVFEGIGAFRAGKIDAGDLLELEQAACPGYGSCAGMFTANSMNCLCEALGLALPGNGTILAVDPRRSELKKWAGRQIVELIKRDLRPRDIVTPEAIDNAFALDVAMGGSTNTILHLLAVAQEAGINYPLKRVNLISARTPTLCKISPASSLHIEDVDRAGGVSAVLGELSRKPGLLNLDCLTVTGETLGETVGQVQSLDPRVIRGVEEPLSPVGGLKVLFGSLAPEGAVVKTAAVVPQMMRHQGPAVVFNSEAEASAAILGGRIKHGDVVVIRFEGPKGGPGFMEMLGPTAALVGMGLGESVALVTDGRFSGGTRGACIGHVCPEAASGGPIALIKDGDLISYDLEAGTLELLVPQEELAARKAAFTPPLRQGLTGWLARYVQMVAPASIGAVLRPACGRPPGEQDYE.

D80 provides a ligand contact to Mg(2+). [2Fe-2S] cluster is bound at residue C121. 2 residues coordinate Mg(2+): D122 and K123. K123 is modified (N6-carboxylysine). [2Fe-2S] cluster is bound at residue C194. E446 serves as a coordination point for Mg(2+). The active-site Proton acceptor is the S472.

It belongs to the IlvD/Edd family. In terms of assembly, homodimer. It depends on [2Fe-2S] cluster as a cofactor. Mg(2+) serves as cofactor.

The enzyme catalyses (2R)-2,3-dihydroxy-3-methylbutanoate = 3-methyl-2-oxobutanoate + H2O. It catalyses the reaction (2R,3R)-2,3-dihydroxy-3-methylpentanoate = (S)-3-methyl-2-oxopentanoate + H2O. It participates in amino-acid biosynthesis; L-isoleucine biosynthesis; L-isoleucine from 2-oxobutanoate: step 3/4. The protein operates within amino-acid biosynthesis; L-valine biosynthesis; L-valine from pyruvate: step 3/4. In terms of biological role, functions in the biosynthesis of branched-chain amino acids. Catalyzes the dehydration of (2R,3R)-2,3-dihydroxy-3-methylpentanoate (2,3-dihydroxy-3-methylvalerate) into 2-oxo-3-methylpentanoate (2-oxo-3-methylvalerate) and of (2R)-2,3-dihydroxy-3-methylbutanoate (2,3-dihydroxyisovalerate) into 2-oxo-3-methylbutanoate (2-oxoisovalerate), the penultimate precursor to L-isoleucine and L-valine, respectively. In Desulforudis audaxviator (strain MP104C), this protein is Dihydroxy-acid dehydratase.